A 298-amino-acid chain; its full sequence is Lipoyl synthase (298 aa).

Residues cysteine 40, cysteine 45, cysteine 51, cysteine 67, cysteine 71, cysteine 74, and serine 280 each contribute to the [4Fe-4S] cluster site. Positions 53 to 269 (AVRRTATFMI…KEIAMQKGFS (217 aa)) constitute a Radical SAM core domain.

Belongs to the radical SAM superfamily. Lipoyl synthase family. [4Fe-4S] cluster serves as cofactor.

Its subcellular location is the cytoplasm. It carries out the reaction [[Fe-S] cluster scaffold protein carrying a second [4Fe-4S](2+) cluster] + N(6)-octanoyl-L-lysyl-[protein] + 2 oxidized [2Fe-2S]-[ferredoxin] + 2 S-adenosyl-L-methionine + 4 H(+) = [[Fe-S] cluster scaffold protein] + N(6)-[(R)-dihydrolipoyl]-L-lysyl-[protein] + 4 Fe(3+) + 2 hydrogen sulfide + 2 5'-deoxyadenosine + 2 L-methionine + 2 reduced [2Fe-2S]-[ferredoxin]. The protein operates within protein modification; protein lipoylation via endogenous pathway; protein N(6)-(lipoyl)lysine from octanoyl-[acyl-carrier-protein]. Catalyzes the radical-mediated insertion of two sulfur atoms into the C-6 and C-8 positions of the octanoyl moiety bound to the lipoyl domains of lipoate-dependent enzymes, thereby converting the octanoylated domains into lipoylated derivatives. The protein is Lipoyl synthase of Bacillus velezensis (strain DSM 23117 / BGSC 10A6 / LMG 26770 / FZB42) (Bacillus amyloliquefaciens subsp. plantarum).